Reading from the N-terminus, the 449-residue chain is Elongation factor 1-alpha (449 aa).

One can recognise a tr-type G domain in the interval lysine 5–serine 230. Residues glycine 14–serine 21 form a G1 region. Glycine 14 to serine 21 is a GTP binding site. Lysine 55 is subject to N6,N6-dimethyllysine. The segment at glycine 70–aspartate 74 is G2. Position 79 is an N6,N6,N6-trimethyllysine (lysine 79). The tract at residues aspartate 91–glycine 94 is G3. GTP is bound by residues aspartate 91–histidine 95 and asparagine 153–aspartate 156. Residues asparagine 153–aspartate 156 are G4. Position 187 is an N6,N6,N6-trimethyllysine (lysine 187). Residues serine 194–phenylalanine 196 are G5. Lysine 261 carries the N6-methyllysine modification. Glutamate 289 carries the post-translational modification 5-glutamyl glycerylphosphorylethanolamine. Lysine 306 carries the N6,N6,N6-trimethyllysine modification. Glutamate 362 carries the post-translational modification 5-glutamyl glycerylphosphorylethanolamine. Lysine 396 carries the post-translational modification N6,N6,N6-trimethyllysine.

It belongs to the TRAFAC class translation factor GTPase superfamily. Classic translation factor GTPase family. EF-Tu/EF-1A subfamily.

It localises to the cytoplasm. In terms of biological role, this protein promotes the GTP-dependent binding of aminoacyl-tRNA to the A-site of ribosomes during protein biosynthesis. The polypeptide is Elongation factor 1-alpha (EF1) (Manihot esculenta (Cassava)).